Here is a 106-residue protein sequence, read N- to C-terminus: Cyclin-dependent protein kinase inhibitor SMR15 (106 aa).

In terms of biological role, probable cyclin-dependent protein kinase (CDK) inhibitor that functions as a repressor of mitosis in the endoreduplication cell cycle. The chain is Cyclin-dependent protein kinase inhibitor SMR15 from Arabidopsis thaliana (Mouse-ear cress).